A 396-amino-acid polypeptide reads, in one-letter code: Elongation factor Tu (396 aa).

Residues 10-206 (KPHCNIGTIG…QVDAYIPQPE (197 aa)) enclose the tr-type G domain. The interval 19 to 26 (GHVDHGKT) is G1. 19 to 26 (GHVDHGKT) contributes to the GTP binding site. T26 lines the Mg(2+) pocket. The segment at 60 to 64 (GITIS) is G2. Positions 81 to 84 (DCPG) are G3. GTP-binding positions include 81–85 (DCPGH) and 136–139 (NKCD). The G4 stretch occupies residues 136–139 (NKCD). The interval 174-176 (SAL) is G5.

The protein belongs to the TRAFAC class translation factor GTPase superfamily. Classic translation factor GTPase family. EF-Tu/EF-1A subfamily. In terms of assembly, monomer.

It localises to the cytoplasm. The catalysed reaction is GTP + H2O = GDP + phosphate + H(+). GTP hydrolase that promotes the GTP-dependent binding of aminoacyl-tRNA to the A-site of ribosomes during protein biosynthesis. This is Elongation factor Tu from Rhodopseudomonas palustris (strain ATCC BAA-98 / CGA009).